Reading from the N-terminus, the 162-residue chain is D-aminoacyl-tRNA deacylase (162 aa).

The short motif at 145–146 (GP) is the Gly-cisPro motif, important for rejection of L-amino acids element.

The protein belongs to the DTD family. In terms of assembly, homodimer.

Its subcellular location is the cytoplasm. It catalyses the reaction glycyl-tRNA(Ala) + H2O = tRNA(Ala) + glycine + H(+). It carries out the reaction a D-aminoacyl-tRNA + H2O = a tRNA + a D-alpha-amino acid + H(+). In terms of biological role, an aminoacyl-tRNA editing enzyme that deacylates mischarged D-aminoacyl-tRNAs. Also deacylates mischarged glycyl-tRNA(Ala), protecting cells against glycine mischarging by AlaRS. Acts via tRNA-based rather than protein-based catalysis; rejects L-amino acids rather than detecting D-amino acids in the active site. By recycling D-aminoacyl-tRNA to D-amino acids and free tRNA molecules, this enzyme counteracts the toxicity associated with the formation of D-aminoacyl-tRNA entities in vivo and helps enforce protein L-homochirality. The sequence is that of D-aminoacyl-tRNA deacylase from Bifidobacterium longum (strain DJO10A).